Reading from the N-terminus, the 332-residue chain is Ferredoxin--NADP reductase 1 (332 aa).

Residues Asp35, Lys43, Phe48, Val88, Phe123, Asp284, and Thr325 each coordinate FAD.

It belongs to the ferredoxin--NADP reductase type 2 family. Homodimer. Requires FAD as cofactor.

It catalyses the reaction 2 reduced [2Fe-2S]-[ferredoxin] + NADP(+) + H(+) = 2 oxidized [2Fe-2S]-[ferredoxin] + NADPH. In Listeria monocytogenes serovar 1/2a (strain ATCC BAA-679 / EGD-e), this protein is Ferredoxin--NADP reductase 1.